A 114-amino-acid chain; its full sequence is Translation initiation factor 1A (114 aa).

An S1-like domain is found at 19–91 (SEFRLPGEGE…EKGDIVHKYE (73 aa)).

The protein belongs to the eIF-1A family.

Functionally, seems to be required for maximal rate of protein biosynthesis. Enhances ribosome dissociation into subunits and stabilizes the binding of the initiator Met-tRNA(I) to 40 S ribosomal subunits. This Pyrobaculum aerophilum (strain ATCC 51768 / DSM 7523 / JCM 9630 / CIP 104966 / NBRC 100827 / IM2) protein is Translation initiation factor 1A (eIF1A).